A 121-amino-acid chain; its full sequence is UPF0045 protein sll0230 (121 aa).

The protein belongs to the UPF0045 family.

The protein is UPF0045 protein sll0230 of Synechocystis sp. (strain ATCC 27184 / PCC 6803 / Kazusa).